Consider the following 85-residue polypeptide: Large ribosomal subunit protein bL27 (85 aa).

A disordered region spans residues 1–20 (MATKKAGGSTRNGRDSEAKR).

Belongs to the bacterial ribosomal protein bL27 family.

This Histophilus somni (strain 129Pt) (Haemophilus somnus) protein is Large ribosomal subunit protein bL27.